We begin with the raw amino-acid sequence, 372 residues long: Peptide chain release factor 1 (372 aa).

Gln-237 bears the N5-methylglutamine mark.

This sequence belongs to the prokaryotic/mitochondrial release factor family. Methylated by PrmC. Methylation increases the termination efficiency of RF1.

It is found in the cytoplasm. In terms of biological role, peptide chain release factor 1 directs the termination of translation in response to the peptide chain termination codons UAG and UAA. This is Peptide chain release factor 1 from Anaeromyxobacter sp. (strain Fw109-5).